The following is a 490-amino-acid chain: MKITVEHLPQSTVRLDIAADPEEFDAALERAFRRISQQVQVPGFRPGRAPRALVERRVGRELIVAEAQRELMDRLYREALQQHRLTPVAEPEVEIYQDEPLAFRVEVQVYPQVDLDGYRDIRVEPREVEVTEEEIDQVIEGLRRSRAVWKTPDEPRQPRDGDQVIVDIEAYEGEQPFQEPLRQATFVLGESNLFAEIDQAIRSLRPGESAEFDISFAEEDERVSPELRGKTLHYRVTVHEVKEAELPEVNDEFAQSLGVATLSELRDRVRRDLLREKAQAARAEVLEQAVQRLLEVATVELPPALIERQVAADVERLREQLRQRGSSLEEYLRFQGKTLEEFKEELRPQAEARLRRYLVLEAFAEAEGIAVSEEELVAEIERLALASGSPEQFRAFYSVPSVRSYLADELHERKVSERLLELVTEGRGAVIGEAARVLAGAEPAEGTEPAAEEAVTAPEVVDGETTPASESAESLAVTETGSRADDDQAS.

Residues Gly-161 to Pro-247 form the PPIase FKBP-type domain. Positions Ala-441–Val-460 are enriched in low complexity. The segment at Ala-441–Ser-490 is disordered. Polar residues predominate over residues Thr-466 to Gly-481.

The protein belongs to the FKBP-type PPIase family. Tig subfamily.

Its subcellular location is the cytoplasm. It catalyses the reaction [protein]-peptidylproline (omega=180) = [protein]-peptidylproline (omega=0). In terms of biological role, involved in protein export. Acts as a chaperone by maintaining the newly synthesized protein in an open conformation. Functions as a peptidyl-prolyl cis-trans isomerase. This Thermomicrobium roseum (strain ATCC 27502 / DSM 5159 / P-2) protein is Trigger factor.